We begin with the raw amino-acid sequence, 333 residues long: MQLLKDKFGRVHDYIRISVTDRCNLRCVYCMPEEGLTFLPHEKVLSKDEIVSFMELMVKFGIKKVRITGGEPLLRTDIVEIVRGLGAIPEIEDISITTNAMYLAKKAEALKDAGLTRVNISLDSLHADRFKAITRGGRLQKVLDGIQKAEEVGLFPIKLNVVLIKGQNDDEITDFLRFTKDKDINIRFIEYMPIGHAGTSWKEKYLPLDTIFEACNEAGYEYEPVDSIRGNGPSENFRIKGAKGTFGVIHPVSAHFCDSCNRLRLTADGYIKACLYWDEEMNIRPFIQDPVKLMQLVQKAIDNKPENHEMALKLQDEVQSNKPTWRRMSQIGG.

The 215-residue stretch at 7-221 (KFGRVHDYIR…FEACNEAGYE (215 aa)) folds into the Radical SAM core domain. Arg-16 contacts GTP. Residues Cys-23 and Cys-27 each coordinate [4Fe-4S] cluster. An S-adenosyl-L-methionine-binding site is contributed by Tyr-29. Cys-30 lines the [4Fe-4S] cluster pocket. Arg-66 is a GTP binding site. Residue Gly-70 coordinates S-adenosyl-L-methionine. Thr-97 contributes to the GTP binding site. Ser-121 lines the S-adenosyl-L-methionine pocket. Lys-158 serves as a coordination point for GTP. An S-adenosyl-L-methionine-binding site is contributed by Met-192. Cys-257 and Cys-260 together coordinate [4Fe-4S] cluster. 262–264 (RLR) lines the GTP pocket. Cys-274 provides a ligand contact to [4Fe-4S] cluster.

The protein belongs to the radical SAM superfamily. MoaA family. In terms of assembly, monomer and homodimer. [4Fe-4S] cluster is required as a cofactor.

It catalyses the reaction GTP + AH2 + S-adenosyl-L-methionine = (8S)-3',8-cyclo-7,8-dihydroguanosine 5'-triphosphate + 5'-deoxyadenosine + L-methionine + A + H(+). It participates in cofactor biosynthesis; molybdopterin biosynthesis. Functionally, catalyzes the cyclization of GTP to (8S)-3',8-cyclo-7,8-dihydroguanosine 5'-triphosphate. This Listeria monocytogenes serotype 4b (strain CLIP80459) protein is GTP 3',8-cyclase.